Consider the following 377-residue polypeptide: Putative glutamate--cysteine ligase 2 (377 aa).

This sequence belongs to the glutamate--cysteine ligase type 2 family. YbdK subfamily.

It carries out the reaction L-cysteine + L-glutamate + ATP = gamma-L-glutamyl-L-cysteine + ADP + phosphate + H(+). In terms of biological role, ATP-dependent carboxylate-amine ligase which exhibits weak glutamate--cysteine ligase activity. This is Putative glutamate--cysteine ligase 2 from Chromobacterium violaceum (strain ATCC 12472 / DSM 30191 / JCM 1249 / CCUG 213 / NBRC 12614 / NCIMB 9131 / NCTC 9757 / MK).